The sequence spans 305 residues: UDP-3-O-acyl-N-acetylglucosamine deacetylase (305 aa).

Zn(2+)-binding residues include His-79, His-238, and Asp-242. The active-site Proton donor is His-265.

The protein belongs to the LpxC family. Zn(2+) is required as a cofactor.

It carries out the reaction a UDP-3-O-[(3R)-3-hydroxyacyl]-N-acetyl-alpha-D-glucosamine + H2O = a UDP-3-O-[(3R)-3-hydroxyacyl]-alpha-D-glucosamine + acetate. The protein operates within glycolipid biosynthesis; lipid IV(A) biosynthesis; lipid IV(A) from (3R)-3-hydroxytetradecanoyl-[acyl-carrier-protein] and UDP-N-acetyl-alpha-D-glucosamine: step 2/6. Catalyzes the hydrolysis of UDP-3-O-myristoyl-N-acetylglucosamine to form UDP-3-O-myristoylglucosamine and acetate, the committed step in lipid A biosynthesis. The protein is UDP-3-O-acyl-N-acetylglucosamine deacetylase of Escherichia fergusonii (strain ATCC 35469 / DSM 13698 / CCUG 18766 / IAM 14443 / JCM 21226 / LMG 7866 / NBRC 102419 / NCTC 12128 / CDC 0568-73).